Consider the following 1087-residue polypeptide: Platelet-derived growth factor receptor alpha (1087 aa).

The N-terminal stretch at 1-24 is a signal peptide; the sequence is MMPAMRASLILGCLLIIGPWAILA. The Extracellular portion of the chain corresponds to 25–530; sequence ENPLPTIFPD…PTLRSELTVA (506 aa). 2 Ig-like C2-type domains span residues 27–114 and 118–211; these read PLPT…SEIE and IYIY…LQTW. The cysteines at positions 50 and 101 are disulfide-linked. N-linked (GlcNAc...) asparagine glycans are attached at residues N77 and N104. C151 and C192 form a disulfide bridge. 7 N-linked (GlcNAc...) asparagine glycosylation sites follow: N216, N282, N309, N356, N362, N461, and N471. 3 consecutive Ig-like C2-type domains span residues 217-309, 315-409, and 417-519; these read ISVE…KKTN, KGFI…KSYS, and PALI…LKLV. C238 and C293 are disulfide-bonded. The cysteines at positions 438 and 503 are disulfide-linked. A helical membrane pass occupies residues 531–551; sequence AAVLVLLVIVIISLIVLVIIW. Over 552-1087 the chain is Cytoplasmic; it reads KQKPRYEIRW…SSDLVEDSFL (536 aa). Y574 and Y576 each carry phosphotyrosine; by autocatalysis. Residues 595-970 enclose the Protein kinase domain; that stretch reads LVLGRILGSG…CYETVLHDFL (376 aa). Residues 601–609 and K629 each bind ATP; that span reads LGSGAFGKV. Residues Y722, Y733, Y744, Y756, and Y764 each carry the phosphotyrosine; by autocatalysis modification. The active-site Proton acceptor is D818. Residues Y849, Y988, and Y1017 each carry the phosphotyrosine; by autocatalysis modification. Residues 1017–1064 are disordered; sequence YIIPLPDIDPVSEDESGKRNRHSSQTSEESAIETGSSSSTFIKRDDET. Residues 1039–1057 show a composition bias toward polar residues; that stretch reads SSQTSEESAIETGSSSSTF.

The protein belongs to the protein kinase superfamily. Tyr protein kinase family. CSF-1/PDGF receptor subfamily. As to quaternary structure, interacts with homodimeric pdgfa, pdgfb and pdgfc, and with heterodimers formed by pdgfa and pdgfb. Monomer in the absence of bound ligand. Interaction with dimeric pdgfa, pdgfb and/or pdgfc leads to receptor dimerization, where both pdgfra homodimers and heterodimers with pdgfrb are observed. Post-translationally, ubiquitinated, leading to its internalization and degradation. Autophosphorylated on tyrosine residues upon ligand binding. Autophosphorylation occurs in trans, i.e. one subunit of the dimeric receptor phosphorylates tyrosine residues on the other subunit.

The protein resides in the cell membrane. Its subcellular location is the cell projection. The protein localises to the cilium. It localises to the golgi apparatus. It carries out the reaction L-tyrosyl-[protein] + ATP = O-phospho-L-tyrosyl-[protein] + ADP + H(+). Its activity is regulated as follows. Present in an inactive conformation in the absence of bound ligand. Binding of pdgfa and/or pdgfb leads to dimerization and activation by autophosphorylation on tyrosine residues. In terms of biological role, tyrosine-protein kinase that acts as a cell-surface receptor for pdgfa, pdgfb and pdgfc and plays an essential role in the regulation of embryonic development, cell proliferation, survival and chemotaxis. Depending on the context, promotes or inhibits cell proliferation and cell migration. Plays an important role in the differentiation of bone marrow-derived mesenchymal stem cells. Required for normal skeleton development. Required for normal development of the gastrointestinal tract. Plays a role in cell migration and chemotaxis in wound healing. Plays a role in platelet activation, secretion of agonists from platelet granules, and in thrombin-induced platelet aggregation. Binding of its cognate ligands - homodimeric pdgfa, homodimeric pdgfb, heterodimers formed by pdgfa and pdgfb or homodimeric pdgfc -leads to the activation of several signaling cascades; the response depends on the nature of the bound ligand and is modulated by the formation of heterodimers between pdgfra and pdgfrb. Phosphorylates pik3r1, plcg1, and ptpn11. Activation of plcg1 leads to the production of the cellular signaling molecules diacylglycerol and inositol 1,4,5-trisphosphate, mobilization of cytosolic Ca(2+) and the activation of protein kinase C. Phosphorylates pik3r1, the regulatory subunit of phosphatidylinositol 3-kinase, and thereby mediates activation of the akt1 signaling pathway. Mediates activation of hras and of the MAP kinases mapk1/erk2 and/or mapk3/erk1. Promotes activation of stat family members stat1, stat3 and stat5a and/or stat5b. Receptor signaling is down-regulated by protein phosphatases that dephosphorylate the receptor and its down-stream effectors, and by rapid internalization of the activated receptor. In Xenopus laevis (African clawed frog), this protein is Platelet-derived growth factor receptor alpha (pdgfra).